Consider the following 107-residue polypeptide: Large ribosomal subunit protein eL33 (107 aa).

It belongs to the eukaryotic ribosomal protein eL33 family. Component of the large ribosomal subunit. Mature ribosomes consist of a small (40S) and a large (60S) subunit. The 40S subunit contains about 32 different proteins and 1 molecule of RNA (18S). The 60S subunit contains 45 different proteins and 3 molecules of RNA (25S, 5.8S and 5S).

The protein localises to the cytoplasm. Its function is as follows. Component of the ribosome, a large ribonucleoprotein complex responsible for the synthesis of proteins in the cell. The small ribosomal subunit (SSU) binds messenger RNAs (mRNAs) and translates the encoded message by selecting cognate aminoacyl-transfer RNA (tRNA) molecules. The large subunit (LSU) contains the ribosomal catalytic site termed the peptidyl transferase center (PTC), which catalyzes the formation of peptide bonds, thereby polymerizing the amino acids delivered by tRNAs into a polypeptide chain. The nascent polypeptides leave the ribosome through a tunnel in the LSU and interact with protein factors that function in enzymatic processing, targeting, and the membrane insertion of nascent chains at the exit of the ribosomal tunnel. This chain is Large ribosomal subunit protein eL33, found in Candida albicans (strain SC5314 / ATCC MYA-2876) (Yeast).